The sequence spans 430 residues: MGSTSTPPHVLIIGAGITGLALAQALRKHGVSFAVYERDPDPLHRGKGWGLTIHWSLDAFLRLLPQHLIDRLPETYVDPDAVAKGENGNFLLFDLRTGETKWKVPPAKRLRVSRERLRRLLMDGIDVQWNKTISSISQISETAVRCEFSDNSSAEGTLLVGCDGSRSKTRSLLCSLAGNETPVRSENYQLPVRLIGVSAALPSRIALKMRALDPFFLQAGDPATSNFFWFSFLDTPINNDREDRDTYECQILISWPYRKDGSNNIEIPCHNVDKIKLMHSLADGWVEPFCEVVQSIPEETEPKIISLEDWPTPPKGSWSNLGGTATLVGDSAHAMTMFRGEAGNHGILDVSNLLEALIPVLTSSPHSPAKTQEEVINEYEDEMTTRTRPAVLRSRKACLDAHDYPSITADSPLVARRGAFEDDDLEYLLN.

An N-terminal signal peptide occupies residues 1 to 23 (MGSTSTPPHVLIIGAGITGLALA). Position 9-37 (9-37 (HVLIIGAGITGLALAQALRKHGVSFAVYE)) interacts with FAD. Residues Asn-130 and Asn-151 are each glycosylated (N-linked (GlcNAc...) asparagine). 307–330 (LEDWPTPPKGSWSNLGGTATLVGD) lines the FAD pocket.

It depends on FAD as a cofactor.

This Arthroderma benhamiae (strain ATCC MYA-4681 / CBS 112371) (Trichophyton mentagrophytes) protein is Probable FAD-dependent monooxygenase.